The primary structure comprises 570 residues: Glutamate--tRNA ligase (570 aa).

The short motif at 107-117 (PNPDFVLHLGS) is the 'HIGH' region element.

Belongs to the class-I aminoacyl-tRNA synthetase family. Glutamate--tRNA ligase type 2 subfamily.

The protein resides in the cytoplasm. The enzyme catalyses tRNA(Glu) + L-glutamate + ATP = L-glutamyl-tRNA(Glu) + AMP + diphosphate. Functionally, catalyzes the attachment of glutamate to tRNA(Glu) in a two-step reaction: glutamate is first activated by ATP to form Glu-AMP and then transferred to the acceptor end of tRNA(Glu). The polypeptide is Glutamate--tRNA ligase (Pyrobaculum islandicum (strain DSM 4184 / JCM 9189 / GEO3)).